We begin with the raw amino-acid sequence, 459 residues long: NADH-ubiquinone oxidoreductase chain 4 (459 aa).

12 helical membrane passes run 20 to 42 (PKWL…LTLF), 61 to 81 (MIST…IIAS), 103 to 123 (LQAL…YIMF), 148 to 168 (IYFL…LLYL), 194 to 214 (FLWV…GVHL), 224 to 244 (PVAG…YGMI), 257 to 277 (LAYP…SICM), 284 to 303 (SLIA…GILI), 307 to 329 (WGFT…LFCL), 350 to 370 (IILP…MALP), 392 to 414 (TILL…YMSS), and 435 to 455 (LLLT…ELIW).

It belongs to the complex I subunit 4 family.

Its subcellular location is the mitochondrion membrane. The catalysed reaction is a ubiquinone + NADH + 5 H(+)(in) = a ubiquinol + NAD(+) + 4 H(+)(out). Its function is as follows. Core subunit of the mitochondrial membrane respiratory chain NADH dehydrogenase (Complex I) that is believed to belong to the minimal assembly required for catalysis. Complex I functions in the transfer of electrons from NADH to the respiratory chain. The immediate electron acceptor for the enzyme is believed to be ubiquinone. The chain is NADH-ubiquinone oxidoreductase chain 4 (MT-ND4) from Polypterus ornatipinnis (Ornate bichir).